The primary structure comprises 647 residues: Probable potassium transport system protein Kup (647 aa).

Helical transmembrane passes span 32–52, 74–94, 124–144, 166–186, 193–213, 230–250, 271–291, 300–320, 322–342, 361–381, 390–410, 418–438, and 443–463; these read IALMFAAIGIVFGDIGTSPLY, VISMVFWAFAIVVSLKYVLFV, LLIIMAGVFGACMFYGDAIIT, FVLPITVLILVILFFIQKTGT, FGPIMMVWFITIGLMGLHQVI, FLIEHSLQGFIVLGAVFLVLT, WFFIVMPCLLLNYFGQGAMFL, PFFLMVPEVFVFPLVILATAA, VIASQAVISGAFSMTSQAILL, IYMPFVNWTLLFLVIVVVLAF, AYGIAVTTTMIVTTLLAAIVM, TILVTLVIGAFLTVDLAFLTA, and IMEGGWFPLLLGAICFLFLMT.

This sequence belongs to the HAK/KUP transporter (TC 2.A.72) family.

It localises to the cell inner membrane. The enzyme catalyses K(+)(in) + H(+)(in) = K(+)(out) + H(+)(out). In terms of biological role, transport of potassium into the cell. Likely operates as a K(+):H(+) symporter. This chain is Probable potassium transport system protein Kup, found in Polynucleobacter asymbioticus (strain DSM 18221 / CIP 109841 / QLW-P1DMWA-1) (Polynucleobacter necessarius subsp. asymbioticus).